The sequence spans 361 residues: Phosphoserine aminotransferase (361 aa).

R42 provides a ligand contact to L-glutamate. Pyridoxal 5'-phosphate-binding positions include 76–77 (AT), W102, T152, D172, and Q195. Position 196 is an N6-(pyridoxal phosphate)lysine (K196). Residue 237–238 (NT) coordinates pyridoxal 5'-phosphate.

The protein belongs to the class-V pyridoxal-phosphate-dependent aminotransferase family. SerC subfamily. In terms of assembly, homodimer. Requires pyridoxal 5'-phosphate as cofactor.

Its subcellular location is the cytoplasm. The catalysed reaction is O-phospho-L-serine + 2-oxoglutarate = 3-phosphooxypyruvate + L-glutamate. It carries out the reaction 4-(phosphooxy)-L-threonine + 2-oxoglutarate = (R)-3-hydroxy-2-oxo-4-phosphooxybutanoate + L-glutamate. It functions in the pathway amino-acid biosynthesis; L-serine biosynthesis; L-serine from 3-phospho-D-glycerate: step 2/3. The protein operates within cofactor biosynthesis; pyridoxine 5'-phosphate biosynthesis; pyridoxine 5'-phosphate from D-erythrose 4-phosphate: step 3/5. Functionally, catalyzes the reversible conversion of 3-phosphohydroxypyruvate to phosphoserine and of 3-hydroxy-2-oxo-4-phosphonooxybutanoate to phosphohydroxythreonine. This chain is Phosphoserine aminotransferase, found in Xanthomonas oryzae pv. oryzae (strain MAFF 311018).